The chain runs to 406 residues: Tyrosine--tRNA ligase (406 aa).

Tyr-39 serves as a coordination point for L-tyrosine. The 'HIGH' region signature appears at 44–53; sequence PTADSLHVGH. 2 residues coordinate L-tyrosine: Tyr-172 and Gln-176. The 'KMSKS' region motif lies at 232 to 236; it reads KMGKT. Lys-235 is an ATP binding site. Positions 344–404 constitute an S4 RNA-binding domain; the sequence is KELLDVLVDR…LGKKKFYNIV (61 aa).

Belongs to the class-I aminoacyl-tRNA synthetase family. TyrS type 1 subfamily. In terms of assembly, homodimer.

The protein localises to the cytoplasm. The enzyme catalyses tRNA(Tyr) + L-tyrosine + ATP = L-tyrosyl-tRNA(Tyr) + AMP + diphosphate + H(+). In terms of biological role, catalyzes the attachment of tyrosine to tRNA(Tyr) in a two-step reaction: tyrosine is first activated by ATP to form Tyr-AMP and then transferred to the acceptor end of tRNA(Tyr). The chain is Tyrosine--tRNA ligase from Fusobacterium nucleatum subsp. nucleatum (strain ATCC 25586 / DSM 15643 / BCRC 10681 / CIP 101130 / JCM 8532 / KCTC 2640 / LMG 13131 / VPI 4355).